The chain runs to 301 residues: F-actin-capping protein subunit beta (301 aa).

The residue at position 31 (S31) is a Phosphoserine. K264 is modified (N6-acetyllysine).

It belongs to the F-actin-capping protein beta subunit family. In terms of assembly, component of the F-actin capping complex, composed of a heterodimer of an alpha and a beta subunit. Subunit of dynactin, a multiprotein complex part of a tripartite complex with dynein and a adapter, such as BICDL1, BICD2 or HOOK3. The dynactin complex is built around ACTR1A/ACTB filament and consists of an actin-related filament composed of a shoulder domain, a pointed end and a barbed end. Its length is defined by its flexible shoulder domain. The soulder is composed of 2 DCTN1 subunits, 4 DCTN2 and 2 DCTN3. The 4 DCNT2 (via N-terminus) bind the ACTR1A filament and act as molecular rulers to determine the length. The pointed end is important for binding dynein-dynactin cargo adapters. Consists of 4 subunits: ACTR10, DCNT4, DCTN5 and DCTN6. The barbed end is composed of a CAPZA1:CAPZB heterodimers, which binds ACTR1A/ACTB filament and dynactin and stabilizes dynactin. Interacts with ARHGAP17. Interaction with RCSD1/CAPZIP. Component of the WASH complex, composed of F-actin-capping protein subunit alpha (CAPZA1, CAPZA2 or CAPZA3), F-actin-capping protein subunit beta (CAPZB), WASH (WASHC1, WASH2P, WASH3P, WASH4P, WASH5P or WASH6P), WASHC2 (WASHC2A or WASHC2C), WASHC3, WASHC4 and WASHC5. Interacts with ACTG1. Directly interacts with CRACD; this interaction decreases binding to actin. As to expression, the isoform beta-3 is predominantly expressed in the testis. It is only detected in total sperm, sperm heads and the calyx fraction, but not in sperm tails or any supernatant fraction. Weaker expression also found in brain.

The protein resides in the cytoplasm. It is found in the cytoskeleton. The protein localises to the perinuclear theca. It localises to the calyx. Functionally, F-actin-capping proteins bind in a Ca(2+)-independent manner to the fast growing ends of actin filaments (barbed end) thereby blocking the exchange of subunits at these ends. Unlike other capping proteins (such as gelsolin and severin), these proteins do not sever actin filaments. Plays a role in the regulation of cell morphology and cytoskeletal organization. Forms, with CAPZB, the barbed end of the fast growing ends of actin filaments in the dynactin complex and stabilizes dynactin structure. The dynactin multiprotein complex activates the molecular motor dynein for ultra-processive transport along microtubules. The sequence is that of F-actin-capping protein subunit beta (CAPZB) from Bos taurus (Bovine).